The sequence spans 559 residues: CTP synthase (559 aa).

Residues Met1–Ile270 are amidoligase domain. Position 13 (Ser13) interacts with CTP. Ser13 contacts UTP. ATP-binding positions include Ser14 to Ile19 and Asp71. Mg(2+)-binding residues include Asp71 and Glu144. CTP is bound by residues Asp151–Glu153, Lys191–Gln196, and Lys227. UTP contacts are provided by residues Lys191–Gln196 and Lys227. A Glutamine amidotransferase type-1 domain is found at Ser295–Arg547. Gly356 contacts L-glutamine. Cys383 (nucleophile; for glutamine hydrolysis) is an active-site residue. L-glutamine is bound by residues Leu384–Gln387, Glu407, and Arg473. Residues His520 and Glu522 contribute to the active site.

This sequence belongs to the CTP synthase family. Homotetramer.

It catalyses the reaction UTP + L-glutamine + ATP + H2O = CTP + L-glutamate + ADP + phosphate + 2 H(+). The catalysed reaction is L-glutamine + H2O = L-glutamate + NH4(+). It carries out the reaction UTP + NH4(+) + ATP = CTP + ADP + phosphate + 2 H(+). Its pathway is pyrimidine metabolism; CTP biosynthesis via de novo pathway; CTP from UDP: step 2/2. Its activity is regulated as follows. Allosterically activated by GTP, when glutamine is the substrate; GTP has no effect on the reaction when ammonia is the substrate. The allosteric effector GTP functions by stabilizing the protein conformation that binds the tetrahedral intermediate(s) formed during glutamine hydrolysis. Inhibited by the product CTP, via allosteric rather than competitive inhibition. Functionally, catalyzes the ATP-dependent amination of UTP to CTP with either L-glutamine or ammonia as the source of nitrogen. Regulates intracellular CTP levels through interactions with the four ribonucleotide triphosphates. This is CTP synthase from Variovorax paradoxus (strain S110).